Consider the following 542-residue polypeptide: Chaperonin GroEL 1 (542 aa).

ATP is bound by residues 29-32 (TIGP), 86-90 (DGTTT), G414, 479-481 (DAL), and D495.

Belongs to the chaperonin (HSP60) family. As to quaternary structure, forms a cylinder of 14 subunits composed of two heptameric rings stacked back-to-back. Interacts with the co-chaperonin GroES.

The protein resides in the cytoplasm. It catalyses the reaction ATP + H2O + a folded polypeptide = ADP + phosphate + an unfolded polypeptide.. In terms of biological role, together with its co-chaperonin GroES, plays an essential role in assisting protein folding. The GroEL-GroES system forms a nano-cage that allows encapsulation of the non-native substrate proteins and provides a physical environment optimized to promote and accelerate protein folding. This is Chaperonin GroEL 1 from Synechococcus sp. (strain JA-3-3Ab) (Cyanobacteria bacterium Yellowstone A-Prime).